The following is a 316-amino-acid chain: Phosphate acyltransferase (316 aa).

It belongs to the PlsX family. In terms of assembly, homodimer. Probably interacts with PlsY.

It is found in the cytoplasm. It catalyses the reaction a fatty acyl-[ACP] + phosphate = an acyl phosphate + holo-[ACP]. Its pathway is lipid metabolism; phospholipid metabolism. In terms of biological role, catalyzes the reversible formation of acyl-phosphate (acyl-PO(4)) from acyl-[acyl-carrier-protein] (acyl-ACP). This enzyme utilizes acyl-ACP as fatty acyl donor, but not acyl-CoA. The polypeptide is Phosphate acyltransferase (Chlamydia felis (strain Fe/C-56) (Chlamydophila felis)).